Here is a 569-residue protein sequence, read N- to C-terminus: ABC1 family protein MCP2 (569 aa).

The transit peptide at 1–18 directs the protein to the mitochondrion; that stretch reads MMTKAFFNKLPFEVFRRY. Residues 19 to 34 are Mitochondrial matrix-facing; the sequence is VRTGKSIPQRSPRTRK. A helical transmembrane segment spans residues 35-51; the sequence is SLLVGGTIASAVVLYNF. Over 52-569 the chain is Mitochondrial intermembrane; the sequence is NDTFHDSVKH…KFIPKTWLSS (518 aa).

The protein belongs to the protein kinase superfamily. ADCK protein kinase family.

The protein resides in the mitochondrion. The protein localises to the mitochondrion inner membrane. Functionally, component of MIOREX complexes, large expressome-like assemblies of ribosomes with factors involved in all the steps of post-transcriptional gene expression. Involved in mitochondrial lipid homeostasis. The protein is ABC1 family protein MCP2 of Saccharomyces cerevisiae (strain ATCC 204508 / S288c) (Baker's yeast).